The following is a 452-amino-acid chain: Bifunctional protein GlmU (452 aa).

The pyrophosphorylase stretch occupies residues 1-233 (MTDRPFAALI…AWEVAGVNSR (233 aa)). UDP-N-acetyl-alpha-D-glucosamine-binding positions include 11–14 (LAAG), K25, Q76, 81–82 (GT), 104–106 (YGD), G144, E159, N174, and N231. Residue D106 coordinates Mg(2+). N231 is a Mg(2+) binding site. The linker stretch occupies residues 234–254 (AELAAVEAEWQRRRRLAAMAD). The segment at 255 to 452 (GATLIAPETV…AMKIKKAARK (198 aa)) is N-acetyltransferase. R320 and K338 together coordinate UDP-N-acetyl-alpha-D-glucosamine. H350 functions as the Proton acceptor in the catalytic mechanism. Residues Y353 and N364 each contribute to the UDP-N-acetyl-alpha-D-glucosamine site. Acetyl-CoA contacts are provided by residues A367, 373-374 (NY), S392, A410, and R427.

It in the N-terminal section; belongs to the N-acetylglucosamine-1-phosphate uridyltransferase family. The protein in the C-terminal section; belongs to the transferase hexapeptide repeat family. Homotrimer. Requires Mg(2+) as cofactor.

The protein resides in the cytoplasm. It catalyses the reaction alpha-D-glucosamine 1-phosphate + acetyl-CoA = N-acetyl-alpha-D-glucosamine 1-phosphate + CoA + H(+). The catalysed reaction is N-acetyl-alpha-D-glucosamine 1-phosphate + UTP + H(+) = UDP-N-acetyl-alpha-D-glucosamine + diphosphate. The protein operates within nucleotide-sugar biosynthesis; UDP-N-acetyl-alpha-D-glucosamine biosynthesis; N-acetyl-alpha-D-glucosamine 1-phosphate from alpha-D-glucosamine 6-phosphate (route II): step 2/2. Its pathway is nucleotide-sugar biosynthesis; UDP-N-acetyl-alpha-D-glucosamine biosynthesis; UDP-N-acetyl-alpha-D-glucosamine from N-acetyl-alpha-D-glucosamine 1-phosphate: step 1/1. It participates in bacterial outer membrane biogenesis; LPS lipid A biosynthesis. Functionally, catalyzes the last two sequential reactions in the de novo biosynthetic pathway for UDP-N-acetylglucosamine (UDP-GlcNAc). The C-terminal domain catalyzes the transfer of acetyl group from acetyl coenzyme A to glucosamine-1-phosphate (GlcN-1-P) to produce N-acetylglucosamine-1-phosphate (GlcNAc-1-P), which is converted into UDP-GlcNAc by the transfer of uridine 5-monophosphate (from uridine 5-triphosphate), a reaction catalyzed by the N-terminal domain. The sequence is that of Bifunctional protein GlmU from Rhizorhabdus wittichii (strain DSM 6014 / CCUG 31198 / JCM 15750 / NBRC 105917 / EY 4224 / RW1) (Sphingomonas wittichii).